The chain runs to 107 residues: Integration host factor subunit beta (107 aa).

A compositionally biased stretch (basic and acidic residues) spans 82–101 (PGKELRERVDRRAGEPLKAE). The tract at residues 82-107 (PGKELRERVDRRAGEPLKAEDPDDDL) is disordered.

Belongs to the bacterial histone-like protein family. In terms of assembly, heterodimer of an alpha and a beta chain.

Functionally, this protein is one of the two subunits of integration host factor, a specific DNA-binding protein that functions in genetic recombination as well as in transcriptional and translational control. The polypeptide is Integration host factor subunit beta (Paraburkholderia xenovorans (strain LB400)).